Consider the following 237-residue polypeptide: Large ribosomal subunit protein uL2 (237 aa).

Positions 1 to 11 are enriched in polar residues; that stretch reads MGKRIISQNRG. Disordered stretches follow at residues 1-20 and 201-237; these read MGKRIISQNRGKGTPTYRAP and FGGGKHQHVGKPKTVSRNAPPGRKVGSIAARRTGVRR.

The protein belongs to the universal ribosomal protein uL2 family. As to quaternary structure, part of the 50S ribosomal subunit. Forms a bridge to the 30S subunit in the 70S ribosome.

One of the primary rRNA binding proteins. Required for association of the 30S and 50S subunits to form the 70S ribosome, for tRNA binding and peptide bond formation. It has been suggested to have peptidyltransferase activity; this is somewhat controversial. Makes several contacts with the 16S rRNA in the 70S ribosome. The protein is Large ribosomal subunit protein uL2 of Archaeoglobus fulgidus (strain ATCC 49558 / DSM 4304 / JCM 9628 / NBRC 100126 / VC-16).